A 252-amino-acid chain; its full sequence is Uracil-DNA glycosylase (252 aa).

Asp78 serves as the catalytic Proton acceptor.

This sequence belongs to the uracil-DNA glycosylase (UDG) superfamily. UNG family.

The protein resides in the cytoplasm. It catalyses the reaction Hydrolyzes single-stranded DNA or mismatched double-stranded DNA and polynucleotides, releasing free uracil.. Its function is as follows. Excises uracil residues from the DNA which can arise as a result of misincorporation of dUMP residues by DNA polymerase or due to deamination of cytosine. In Bordetella avium (strain 197N), this protein is Uracil-DNA glycosylase.